Consider the following 182-residue polypeptide: Ribosome maturation factor RimM (182 aa).

The region spanning 103-182 is the PRC barrel domain; the sequence is EDEFYWRELF…RIEVDWDPGF (80 aa).

It belongs to the RimM family. As to quaternary structure, binds ribosomal protein uS19.

It is found in the cytoplasm. Functionally, an accessory protein needed during the final step in the assembly of 30S ribosomal subunit, possibly for assembly of the head region. Essential for efficient processing of 16S rRNA. May be needed both before and after RbfA during the maturation of 16S rRNA. It has affinity for free ribosomal 30S subunits but not for 70S ribosomes. The protein is Ribosome maturation factor RimM of Vibrio campbellii (strain ATCC BAA-1116).